Here is a 385-residue protein sequence, read N- to C-terminus: MLIIFLFFNFCYGFNEPLNVVSHLNHDWFLFGDSRSDCNHINNLKIKNYGYLDIHPSLCNNGKISSSAGDSIFKSYHFTRFYNYTGEGDQIIFYEGVNFNPHHRFKCFFNGSNDVWIFNKVRFYRALYSNMALFRYLTFVDILYNFSFSIKANICNSNILSLNNPIFISTNYSKDVYFTLSGCSLYLVPLCLFKSNFSQYYYNMDTGFAYGYSNFVSSDLDCTYISLKPGSYKIFSTGFVLSIPTKALCFNKSKQFVPVQVVDSRWNNLRASDTSLSDACQLPYCYFRNSSGNYVGKYDINHGDNGFTSILSGLLYNVSCISYYGSFLYDNFTSIWPRFSFGNCPTSAYIKLNCFYDPLPIILQGILLFLALLFIVFLLFLVYHG.

A signal peptide spans 1–11 (MLIIFLFFNFC). Residues 1-121 (MLIIFLFFNF…SNDVWIFNKV (121 aa)) form an esterase domain 1 region. Topologically, residues 12-361 (YGFNEPLNVV…LNCFYDPLPI (350 aa)) are virion surface. S34 (nucleophile) is an active-site residue. The cysteines at positions 38 and 59 are disulfide-linked. N-linked (GlcNAc...) asparagine; by host glycans are attached at residues N83, N110, N145, N171, N196, and N251. C107 and C155 are oxidised to a cystine. The segment at 122–239 (RFYRALYSNM…GSYKIFSTGF (118 aa)) is receptor binding. 2 disulfide bridges follow: C183–C249 and C191–C222. The segment at 240–352 (VLSIPTKALC…NCPTSAYIKL (113 aa)) is esterase domain 2. A disulfide bridge connects residues C280 and C285. N-linked (GlcNAc...) asparagine; by host glycosylation is present at N289. Catalysis depends on charge relay system residues D299 and H302. The cysteines at positions 320 and 344 are disulfide-linked. A glycan (N-linked (GlcNAc...) asparagine; by host) is linked at N331. A helical transmembrane segment spans residues 362-382 (ILQGILLFLALLFIVFLLFLV). Over 383 to 385 (YHG) the chain is Intravirion.

This sequence belongs to the influenza type C/coronaviruses hemagglutinin-esterase family. As to quaternary structure, homodimer; disulfide-linked. Forms a complex with the M protein in the pre-Golgi. Associates then with S-M complex to form a ternary complex S-M-HE. Post-translationally, N-glycosylated in the host RER.

The protein resides in the virion membrane. It is found in the host cell membrane. The enzyme catalyses N-acetyl-9-O-acetylneuraminate + H2O = N-acetylneuraminate + acetate + H(+). It carries out the reaction N-acetyl-4-O-acetylneuraminate + H2O = N-acetylneuraminate + acetate + H(+). Functionally, structural protein that makes short spikes at the surface of the virus. Contains receptor binding and receptor-destroying activities. Mediates de-O-acetylation of N-acetyl-4-O-acetylneuraminic acid, which is probably the receptor determinant recognized by the virus on the surface of erythrocytes and susceptible cells. This receptor-destroying activity is important for virus release as it probably helps preventing self-aggregation and ensures the efficient spread of the progeny virus from cell to cell. May serve as a secondary viral attachment protein for initiating infection, the spike protein being the major one. May become a target for both the humoral and the cellular branches of the immune system. The sequence is that of Hemagglutinin-esterase from Human coronavirus HKU1 (isolate N2) (HCoV-HKU1).